A 310-amino-acid polypeptide reads, in one-letter code: tRNA dimethylallyltransferase (310 aa).

14 to 21 (GPTASGKS) contributes to the ATP binding site. 16-21 (TASGKS) contacts substrate. Interaction with substrate tRNA regions lie at residues 39–42 (DSMQ) and 163–167 (QRIVR).

It belongs to the IPP transferase family. Monomer. Requires Mg(2+) as cofactor.

It catalyses the reaction adenosine(37) in tRNA + dimethylallyl diphosphate = N(6)-dimethylallyladenosine(37) in tRNA + diphosphate. In terms of biological role, catalyzes the transfer of a dimethylallyl group onto the adenine at position 37 in tRNAs that read codons beginning with uridine, leading to the formation of N6-(dimethylallyl)adenosine (i(6)A). This Brucella suis biovar 1 (strain 1330) protein is tRNA dimethylallyltransferase.